The sequence spans 129 residues: Glycine cleavage system H protein (129 aa).

In terms of domain architecture, Lipoyl-binding spans 24-106 (TYTVGITEHA…YVGGWIFKIK (83 aa)). The residue at position 65 (Lys-65) is an N6-lipoyllysine.

It belongs to the GcvH family. As to quaternary structure, the glycine cleavage system is composed of four proteins: P, T, L and H. It depends on (R)-lipoate as a cofactor.

Its function is as follows. The glycine cleavage system catalyzes the degradation of glycine. The H protein shuttles the methylamine group of glycine from the P protein to the T protein. This chain is Glycine cleavage system H protein, found in Salmonella paratyphi B (strain ATCC BAA-1250 / SPB7).